The following is a 276-amino-acid chain: Adenylate kinase (276 aa).

ATP is bound at residue 50–55; the sequence is GAGKGT. The interval 70-99 is NMP; sequence ATGDMLRSQVAKKTPLGREAKKIMDQGGLV. Residues T71, R76, 97–99, 126–129, and Q133 each bind AMP; these read GLV and GFPR. Residues 167–204 are LID; it reads GRLVHPASGRSYHTTFNPPKKAMTDDVTGEPLIQRSDD. ATP is bound by residues R168 and 177–178; that span reads SY. AMP contacts are provided by R201 and R212. Q240 contacts ATP.

The protein belongs to the adenylate kinase family. AK2 subfamily. In terms of assembly, monomer.

It is found in the cytoplasm. The protein localises to the cytosol. It localises to the mitochondrion intermembrane space. It catalyses the reaction AMP + ATP = 2 ADP. In terms of biological role, catalyzes the reversible transfer of the terminal phosphate group between ATP and AMP. Plays an important role in cellular energy homeostasis and in adenine nucleotide metabolism. Adenylate kinase activity is critical for regulation of the phosphate utilization and the AMP de novo biosynthesis pathways. This chain is Adenylate kinase, found in Pyricularia oryzae (strain 70-15 / ATCC MYA-4617 / FGSC 8958) (Rice blast fungus).